A 538-amino-acid chain; its full sequence is MGLLLLVLILTPLLAAYRHPDFPLLEKAQQLLQSTGSPYSTNCWLCTSSSTETPGTAYPASPREWTSIEAELHISYQWDPNLKGLMRPANSLLSTVKQDFPDIRQKPPIFGPIFTNINLMGIAPICVTAKRKNGTNVGTLPSTVCNVTFTVDPNQQTYQTYTHNQFRHQPRFPKPPNITFPQGTLLDKSTRFCQGRPSSCSTRNFWFRPADYNQCLQISNLSSTAEWVLLDQTRNSLFWENKTKGANQSQTPCVQVLAGMTIATSYLGISAVSEFFGNSLTPLFHFHISTCLKTQGAFYICGQSIHQCLPSNWTGTCTIGYVTPDIFIAPGNLSLPIPIYGKSQLPRVRRAIHFIPLLAGLGILAGTGTGIAGITKASLTYSQLSKEIANNIDTMAKTLTTVQEQIDSLAAVVLQNRRGLDMLTAAQGGICLALDEKCCFWVNQSGKVQDNIRQLLNQASSLRERATQGWLNWEGTWKWFSWVLPFIGPFVSLLLLLLFGPCLLNLITQFVSSRLQAIKLQTNLSAGRRPRTIQESPF.

Positions 1–15 are cleaved as a signal peptide; it reads MGLLLLVLILTPLLA. Over 31 to 478 the chain is Extracellular; the sequence is LLQSTGSPYS…GWLNWEGTWK (448 aa). The short motif at 43-46 is the CXXC element; it reads CWLC. 3 disulfide bridges follow: C43–C46, C43–C439, and C431–C438. N133, N146, N177, N220, N241, N247, N312, and N332 each carry an N-linked (GlcNAc...) asparagine glycan. Residues 354–374 form a fusion peptide region; that stretch reads FIPLLAGLGILAGTGTGIAGI. A CKS-17 motif is present at residues 414–430; sequence LQNRRGLDMLTAAQGGI. Positions 431-439 match the CX6CC motif; that stretch reads CLALDEKCC. N443 is a glycosylation site (N-linked (GlcNAc...) asparagine). Residues 479–499 traverse the membrane as a helical segment; it reads WFSWVLPFIGPFVSLLLLLLF. The Cytoplasmic portion of the chain corresponds to 500–538; that stretch reads GPCLLNLITQFVSSRLQAIKLQTNLSAGRRPRTIQESPF.

The protein belongs to the gamma type-C retroviral envelope protein family. HERV class-I FRD env subfamily. In terms of assembly, the surface and transmembrane proteins form a heterodimer. They are attached by non-covalent interactions or by a labile interchain disulfide bond. In terms of processing, specific enzymatic cleavages in vivo yield the mature SU and TM proteins. The CXXC motif is highly conserved across a broad range of retroviral envelope proteins. It is thought to participate in the formation of a labile disulfide bond possibly with the CX6CC motif present in the transmembrane protein.

The protein resides in the cell membrane. This endogenous retroviral envelope protein has retained its original fusogenic properties and participates in trophoblast fusion and the formation of a syncytium during placenta morphogenesis. The interaction with MFSD2A is apparently important for this process. Its function is as follows. Endogenous envelope proteins may have kept, lost or modified their original function during evolution and this one is unable to confer infectivity. This Hylobates moloch (Silvery gibbon) protein is Syncytin-2 (ERVFRD-1).